We begin with the raw amino-acid sequence, 573 residues long: Adenine deaminase 2 (573 aa).

The protein belongs to the metallo-dependent hydrolases superfamily. Adenine deaminase family. Mn(2+) serves as cofactor.

The catalysed reaction is adenine + H2O + H(+) = hypoxanthine + NH4(+). The protein is Adenine deaminase 2 of Shouchella clausii (strain KSM-K16) (Alkalihalobacillus clausii).